Here is a 497-residue protein sequence, read N- to C-terminus: Cytochrome P450 monooxygenase opdB (497 aa).

The helical transmembrane segment at 26–46 threads the bilayer; that stretch reads YLGAMAGSVILLISAFTLSLG. The interval 69–90 is disordered; the sequence is MSKFTRSRELSQQGEDAAGTEP. Position 454 (Cys454) interacts with heme.

The cofactor is heme.

It is found in the membrane. The protein operates within secondary metabolite biosynthesis. Functionally, cytochrome P450 monooxygenase; part of the gene cluster that mediates the biosynthesis of oxopyrrolidines, polyketide-amino acid hybrid compounds with feature structures of tetramic acid. Does not seem to play a role in oxopyrrolidines A and B biosynthesis. May be involved in further modifications of these oxopyrrolidines. The sequence is that of Cytochrome P450 monooxygenase opdB from Penicillium oxalicum (strain 114-2 / CGMCC 5302) (Penicillium decumbens).